Here is a 739-residue protein sequence, read N- to C-terminus: Poly(A) polymerase alpha (739 aa).

Low complexity predominate over residues 1–17 (MPFPVTTQGSQQTQPPQ). The disordered stretch occupies residues 1-22 (MPFPVTTQGSQQTQPPQRHYGI). 2 positions are modified to phosphoserine: S10 and S24. Residues 100–102 (FGS), T109, 113–115 (DID), D167, K228, Y237, and 246–247 (GV) each bind ATP. D113, D115, and D167 together coordinate Mg(2+). Residues K444, K445, K506, and K507 each participate in a glycyl lysine isopeptide (Lys-Gly) (interchain with G-Cter in SUMO) cross-link. Residues 490 to 507 (RKQLHQLLPSHVLQKRKK) carry the Nuclear localization signal 1 motif. Residues 508 to 643 (HSTEGVKLTA…TKVPNPIVGV (136 aa)) form a ser/Thr-rich region. Residues 523–534 (LDLSMDSDNSMS) show a composition bias toward low complexity. A disordered region spans residues 523–725 (LDLSMDSDNS…SDIPALPANP (203 aa)). The segment covering 535-557 (VPSPTSAMKTSPLNSSGSSQGRN) has biased composition (polar residues). S537 carries the phosphoserine; by MAPK modification. S558 carries the phosphoserine modification. Polar residues predominate over residues 566–582 (ASVTSIQASEVSVPQAN). Low complexity-rich tracts occupy residues 583-594 (SSESPGGPSSES) and 611-622 (TVSRVVSSTRLV). N6-acetyllysine occurs at positions 635 and 644. Positions 644-659 (KRTSSPNKEESPKKTK) match the Nuclear localization signal 2 motif. Basic and acidic residues-rich tracts occupy residues 650-660 (NKEESPKKTKT) and 676-686 (GHDKTETKEQV). The required for interaction with NUDT21 stretch occupies residues 671 to 739 (CLALSGHDKT…KNSIKLRLNR (69 aa)). Positions 691 to 715 (SAVQSETVPASASLLASQKTSSTDL) are enriched in polar residues. Position 730 is an N6-acetyllysine; alternate (K730). K730 participates in a covalent cross-link: Glycyl lysine isopeptide (Lys-Gly) (interchain with G-Cter in SUMO); alternate. Residue S732 is modified to Phosphoserine. At K734 the chain carries N6-acetyllysine; alternate. K734 participates in a covalent cross-link: Glycyl lysine isopeptide (Lys-Gly) (interchain with G-Cter in SUMO); alternate.

This sequence belongs to the poly(A) polymerase family. Monomer. Found in a complex with CPSF1, FIP1L1 and PAPOLA. Interacts with AHCYL1 and FIP1L1; the interaction with AHCYL1 seems to increase interaction with FIP1L1. Interacts with NUDT21; the interaction is diminished by acetylation. Interacts with KPNB1; the interaction promotes PAP nuclear import and is inhibited by acetylation of PAP. Mg(2+) is required as a cofactor. It depends on Mn(2+) as a cofactor. Polysumoylated. Varying sumoylation depending on tissue- and cell-type. Highly sumoylated in bladder and NIH 3T3 cells. Sumoylation is required for nuclear localization and enhances PAP stability. Desumoylated by SENP1. Inhibits polymerase activity. Post-translationally, hyperphosphorylation on multiple CDK2 consensus and non-consensus sites in the C-terminal Ser/Thr-rich region represses PAP activity in late M-phase. Phosphorylation/dephosphorylation may regulate the interaction between PAP and CPSF. In terms of processing, acetylated in the C-terminus. Acetylation decreases interaction with NUDT21 and KPNB1, and inhibits nuclear localization through inhibiting binding to the importin alpha/beta complex. As to expression, expressed in brain, thymus, lung, kidney, bladder, testis and spleen.

The protein resides in the nucleus. The catalysed reaction is RNA(n) + ATP = RNA(n)-3'-adenine ribonucleotide + diphosphate. In terms of biological role, polymerase that creates the 3'-poly(A) tail of mRNA's. Also required for the endoribonucleolytic cleavage reaction at some polyadenylation sites. May acquire specificity through interaction with a cleavage and polyadenylation specificity factor (CPSF) at its C-terminus. The polypeptide is Poly(A) polymerase alpha (Papola) (Mus musculus (Mouse)).